Here is a 554-residue protein sequence, read N- to C-terminus: Phospholipase B-like protein E (554 aa).

Positions 1 to 19 (MKLFILLIVIVFLISNSYS) are cleaved as a signal peptide. N-linked (GlcNAc...) asparagine glycosylation is found at Asn-113, Asn-140, Asn-231, Asn-302, Asn-340, and Asn-546.

The protein belongs to the phospholipase B-like family.

The protein localises to the secreted. In terms of biological role, probable phospholipase. The sequence is that of Phospholipase B-like protein E (plbE) from Dictyostelium discoideum (Social amoeba).